The chain runs to 323 residues: Pectate lyase A (323 aa).

The signal sequence occupies residues M1–R31. The N-linked (GlcNAc...) asparagine glycan is linked to N95. Residues D136, D165, and D169 each contribute to the Ca(2+) site. The active site involves R222.

It belongs to the polysaccharide lyase 1 family. Ca(2+) serves as cofactor.

It is found in the secreted. The catalysed reaction is Eliminative cleavage of (1-&gt;4)-alpha-D-galacturonan to give oligosaccharides with 4-deoxy-alpha-D-galact-4-enuronosyl groups at their non-reducing ends.. Pectinolytic enzyme consist of four classes of enzymes: pectin lyase, polygalacturonase, pectin methylesterase and rhamnogalacturonase. Among pectinolytic enzymes, pectin lyase is the most important in depolymerization of pectin, since it cleaves internal glycosidic bonds of highly methylated pectins. Favors pectate, the anion, over pectin, the methyl ester. The protein is Pectate lyase A (plyA) of Aspergillus niger.